Here is a 299-residue protein sequence, read N- to C-terminus: Ciliary microtubule inner protein 2B (299 aa).

This sequence belongs to the CIMIP2 family. In terms of tissue distribution, expressed in airway epithelial cells.

The protein resides in the cytoplasm. It localises to the cytoskeleton. The protein localises to the cilium axoneme. Functionally, microtubule inner protein (MIP) part of the dynein-decorated doublet microtubules (DMTs) in cilia axoneme, which is required for motile cilia beating. The polypeptide is Ciliary microtubule inner protein 2B (cimip2b) (Danio rerio (Zebrafish)).